The following is a 55-amino-acid chain: uncharacterized protein (55 aa).

Residues 24-46 (LFIIFFTYSYYYCGFLQSFNYII) form a helical membrane-spanning segment.

The protein localises to the membrane. This is an uncharacterized protein from Dictyostelium discoideum (Social amoeba).